We begin with the raw amino-acid sequence, 610 residues long: Scarecrow-like protein 11 (610 aa).

3 disordered regions span residues Asn32–Val54, Gln98–Lys159, and Gln186–Asn220. Composition is skewed to low complexity over residues Ser41–Pro52 and Gln99–Asp119. 2 stretches are compositionally biased toward polar residues: residues Pro123–Glu137 and Gly209–Asn220. Residues Lys215–Lys598 enclose the GRAS domain. Residues Val222–Pro283 form a leucine repeat I (LRI) region. The VHIID stretch occupies residues Tyr302–Gly367. The short motif at Leu333–Asp337 is the VHIID element. The interval Glu383–Glu415 is leucine repeat II (LRII). The PFYRE stretch occupies residues Thr424–Ser520. The tract at residues Ser523 to Lys598 is SAW.

This sequence belongs to the GRAS family. As to expression, highly expressed in roots and at lower levels in leaves and sepals. Expressed in siliques.

It is found in the nucleus. Probable transcription factor involved in plant development. The chain is Scarecrow-like protein 11 (SCL11) from Arabidopsis thaliana (Mouse-ear cress).